The sequence spans 683 residues: Stromal interaction molecule 1 (683 aa).

The N-terminal stretch at 1–22 (MDVCARLALWLLWGLLLHHGQS) is a signal peptide. At 23 to 211 (LSQSHSEKAT…LLTRHNHLKD (189 aa)) the chain is on the extracellular side. EF-hand domains follow at residues 62 to 95 (SFDAVRSIHKLMDDDANGDVDVEESDEFLREDLN) and 100 to 124 (TVKHSTFHGEDKLISVEDLWKAWKS). D74, D76, N78, D80, and E85 together coordinate Ca(2+). 2 N-linked (GlcNAc...) asparagine glycosylation sites follow: N129 and N169. The region spanning 130 to 198 (WTVDEVVQWL…QLKALDTVLF (69 aa)) is the SAM domain. A helical transmembrane segment spans residues 212–232 (FMLVVSIVIGVGGCWFAYIQN). The Cytoplasmic segment spans residues 233-683 (RYSKEHMKKM…LKIFKKPLKK (451 aa)). Residues 246-440 (LEGLHRAEQS…IEILCGFQIV (195 aa)) are a coiled coil. Residue S255 is modified to Phosphoserine. The interval 342-440 (PEALQKWLQL…IEILCGFQIV (99 aa)) is SOAR/CAD. The contributes to fast Ca(2+)-dependent inactivation of CRAC channels stretch occupies residues 473 to 481 (DDVDDMDEE). Over residues 488–497 (MQSPSLQSSV) the composition is skewed to low complexity. Positions 488–535 (MQSPSLQSSVRQRLTEPQHGLGSQRDLTHSDSESSLHMSDRQRLAPKP) are disordered. T502 bears the Phosphothreonine mark. Position 510 is a phosphoserine (S510). Residues 513-530 (DLTHSDSESSLHMSDRQR) are compositionally biased toward basic and acidic residues. Position 515 is a phosphothreonine (T515). A phosphoserine mark is found at S517, S519, S521, S522, S565, S573, S606, S616, and S626. The tract at residues 597–683 (LSSPALPSGS…LKIFKKPLKK (87 aa)) is disordered. Positions 640 to 643 (TRIP) match the Microtubule tip localization signal motif. Residues 653–664 (EEDNGSIGEETD) show a composition bias toward acidic residues. Phosphoserine is present on S658. The residue at position 663 (T663) is a Phosphothreonine. The residue at position 666 (S666) is a Phosphoserine. Residues 668–683 (GRKKFPLKIFKKPLKK) show a composition bias toward basic residues. Residues 670–683 (KKFPLKIFKKPLKK) form a required for generation of inwardly rectifying CRAC currents region.

As to quaternary structure, monomer in the presence of Ca(2+). It oligomerizes in absence of Ca(2+). Forms homooligomers and heterooligomers with STIM2. Interacts with pore-forming subunits of CRAC channels, ORAI1, ORAI2 and ORAI3; this interaction is potentiated upon Ca(2+) store depletion. Interacts (via the transmembrane region and the SOAR/CAD domain) with SPPL3; the interaction promotes the binding of STIM1 to ORAI1. Interacts with ORAI1. Interacts with MAPRE1; probably required for targeting to the growing microtubule plus ends. Interacts with CRACR2A/EFCAB4B; the interaction is direct and takes place in absence of Ca(2+). Forms a complex with CRACR2A/EFCAB4B and ORAI1 at low concentration of Ca(2+), the complex dissociates at elevated Ca(2+) concentrations. Interacts with SARAF, promoting a slow inactivation of STIM1-dependent SOCE activity, possibly by facilitating the deoligomerization of STIM1. Interacts with EFHB; the interaction takes place upon Ca(2+)-store depletion and inhibits the association with SARAF. Interacts with ASPH. Interacts with SLC35G1; intracellular Ca(2+)-dependent. May interact with ATP1A1, ATP2A2, ATP2B1, ATP2B4, KPNB1 and XPO1; through SLC35G1. Interacts with TMEM203. Interacts with STIMATE, promoting STIM1 conformational switch. Interacts with TMEM178A. Interacts with CASQ1 (via C-terminal end and preferentially with the monomeric form); this interaction increases in response to a depletion of intracellular calcium, decreases both STIM1 aggregation and clustering, interaction of STIM1 with ORAI1 and store-operated Ca(2+) entry (SOCE) activity. Glycosylation is required for cell surface expression. Post-translationally, phosphorylated predominantly on Ser residues.

It localises to the cell membrane. Its subcellular location is the endoplasmic reticulum membrane. The protein resides in the sarcoplasmic reticulum. The protein localises to the cytoplasm. It is found in the cytoskeleton. Acts as a Ca(2+) sensor that gates two major inward rectifying Ca(2+) channels at the plasma membrane: Ca(2+) release-activated Ca(2+) (CRAC) channels and arachidonate-regulated Ca(2+)-selective (ARC) channels. Plays a role in mediating store-operated Ca(2+) entry (SOCE), a Ca(2+) influx following depletion of intracellular Ca(2+) stores. Upon Ca(2+) depletion, translocates from the endoplasmic reticulum to the plasma membrane where it activates CRAC channel pore-forming subunits ORA1, ORA2 and ORAI3 to generate sustained and oscillatory Ca(2+) entry. Involved in enamel formation. The chain is Stromal interaction molecule 1 (STIM1) from Bos taurus (Bovine).